The chain runs to 227 residues: Transmembrane emp24 domain-containing protein 4 (227 aa).

The N-terminal stretch at 1–29 is a signal peptide; it reads MAGVGAGPLRAMGRQALLLLALCATGAQG. The Lumenal portion of the chain corresponds to 30–194; it reads LYFHIGETEK…RLTSESTNQR (165 aa). Residues 39–137 enclose the GOLD domain; that stretch reads KRCFIEEIPD…KLRVHLDIQV (99 aa). Asn-117 is a glycosylation site (N-linked (GlcNAc...) asparagine). Residues 147 to 176 adopt a coiled-coil conformation; sequence IAAKDKLTELQLRARQLLDQVEQIQKEQDY. The helical transmembrane segment at 195 to 212 threads the bilayer; sequence VLWWSIAQTVILILTGIW. Topologically, residues 213-227 are cytoplasmic; sequence QMRHLKSFFEAKKLV. The COPII vesicle coat-binding signature appears at 220-221; sequence FF. The COPI vesicle coat-binding signature appears at 220 to 227; sequence FFEAKKLV.

This sequence belongs to the EMP24/GP25L family.

It localises to the endoplasmic reticulum membrane. In terms of biological role, involved in vesicular protein trafficking, mainly in the early secretory pathway. targeting. Involved in the maintenance of the Golgi apparatus. Appears to play a role in the biosynthesis of secreted cargo including processing. Involved in endoplasmic reticulum stress response. May play a role in the regulation of heat-shock response and apoptosis. The sequence is that of Transmembrane emp24 domain-containing protein 4 (TMED4) from Homo sapiens (Human).